The primary structure comprises 274 residues: Penicillin-insensitive murein endopeptidase (274 aa).

A signal peptide spans Met-1–Ala-19. Intrachain disulfides connect Cys-44-Cys-265, Cys-187-Cys-235, and Cys-216-Cys-223. Residues His-110, His-113, Asp-120, Asp-147, His-150, and His-211 each coordinate Zn(2+). A disordered region spans residues Pro-227–Ile-274.

The protein belongs to the peptidase M74 family. In terms of assembly, dimer. It depends on Zn(2+) as a cofactor.

The protein localises to the periplasm. Its function is as follows. Murein endopeptidase that cleaves the D-alanyl-meso-2,6-diamino-pimelyl amide bond that connects peptidoglycan strands. Likely plays a role in the removal of murein from the sacculus. In Shigella dysenteriae serotype 1 (strain Sd197), this protein is Penicillin-insensitive murein endopeptidase.